Here is a 236-residue protein sequence, read N- to C-terminus: Ribonuclease HII (236 aa).

The RNase H type-2 domain maps to 27-219 (RILCGVDEAG…VRRALDGAPP (193 aa)). A divalent metal cation contacts are provided by Asp33, Glu34, and Asp128. Positions 212-236 (RALDGAPPPAGDAVPQTDAKTAWAD) are disordered.

Belongs to the RNase HII family. Mn(2+) serves as cofactor. It depends on Mg(2+) as a cofactor.

It localises to the cytoplasm. The catalysed reaction is Endonucleolytic cleavage to 5'-phosphomonoester.. Its function is as follows. Endonuclease that specifically degrades the RNA of RNA-DNA hybrids. This chain is Ribonuclease HII, found in Ralstonia nicotianae (strain ATCC BAA-1114 / GMI1000) (Ralstonia solanacearum).